The following is a 421-amino-acid chain: MTVDRFYIHGPTPLSGEVNISGAKNSALPILFATLLTEEPVEIFNVPKLKDIDVTIKLLTQLGAKVDHCDVVFVDTSSVNTCCASYDLVKSMRASIWALGPLVARFGEGKIWLPGGCSIGKRLVDLHVNGLEQLGATIILEEEYVTASVNGRLHGAHIIMDKISVGATVTIMSAAALAEGVTIIDNAAREPEIVDTANFLIMLGTNINGAGSNRITIEGAQKLGGGKYSIMPDRIETGTFLVAAAVSRTNVVCLGSRPDTLRFVIKKLRESGADINMGKDWIGLNMHGKRPKAVTVCTKPYPGFPTDMQAQFTLLNIVSKGKGKIIETIFENRFMHVPELVRMGARIKILNNMIVCHGVDSLIGTQVMATDLRASASLVLAGCIAEGLTIVDCVYHIDRGYDHIEKKLRNMGAHIKRVTNK.

Residue K24 to N25 participates in phosphoenolpyruvate binding. Residue R93 coordinates UDP-N-acetyl-alpha-D-glucosamine. C117 functions as the Proton donor in the catalytic mechanism. 2-(S-cysteinyl)pyruvic acid O-phosphothioketal is present on C117. The UDP-N-acetyl-alpha-D-glucosamine site is built by D307 and I329.

Belongs to the EPSP synthase family. MurA subfamily.

It localises to the cytoplasm. It catalyses the reaction phosphoenolpyruvate + UDP-N-acetyl-alpha-D-glucosamine = UDP-N-acetyl-3-O-(1-carboxyvinyl)-alpha-D-glucosamine + phosphate. It functions in the pathway cell wall biogenesis; peptidoglycan biosynthesis. Cell wall formation. Adds enolpyruvyl to UDP-N-acetylglucosamine. The protein is UDP-N-acetylglucosamine 1-carboxyvinyltransferase of Blochmanniella pennsylvanica (strain BPEN).